A 96-amino-acid chain; its full sequence is Large ribosomal subunit protein bL28 (96 aa).

It belongs to the bacterial ribosomal protein bL28 family.

This is Large ribosomal subunit protein bL28 from Orientia tsutsugamushi (strain Boryong) (Rickettsia tsutsugamushi).